The primary structure comprises 448 residues: Exodeoxyribonuclease 7 large subunit (448 aa).

This sequence belongs to the XseA family. In terms of assembly, heterooligomer composed of large and small subunits.

Its subcellular location is the cytoplasm. The enzyme catalyses Exonucleolytic cleavage in either 5'- to 3'- or 3'- to 5'-direction to yield nucleoside 5'-phosphates.. Bidirectionally degrades single-stranded DNA into large acid-insoluble oligonucleotides, which are then degraded further into small acid-soluble oligonucleotides. The chain is Exodeoxyribonuclease 7 large subunit from Tolumonas auensis (strain DSM 9187 / NBRC 110442 / TA 4).